Here is a 217-residue protein sequence, read N- to C-terminus: Imidazole glycerol phosphate synthase subunit HisH (217 aa).

The region spanning 3-217 (TIAIVDYGVG…LYRNFVHWNP (215 aa)) is the Glutamine amidotransferase type-1 domain. The active-site Nucleophile is the C82. Active-site residues include H197 and E199.

Heterodimer of HisH and HisF.

Its subcellular location is the cytoplasm. It carries out the reaction 5-[(5-phospho-1-deoxy-D-ribulos-1-ylimino)methylamino]-1-(5-phospho-beta-D-ribosyl)imidazole-4-carboxamide + L-glutamine = D-erythro-1-(imidazol-4-yl)glycerol 3-phosphate + 5-amino-1-(5-phospho-beta-D-ribosyl)imidazole-4-carboxamide + L-glutamate + H(+). It catalyses the reaction L-glutamine + H2O = L-glutamate + NH4(+). Its pathway is amino-acid biosynthesis; L-histidine biosynthesis; L-histidine from 5-phospho-alpha-D-ribose 1-diphosphate: step 5/9. Functionally, IGPS catalyzes the conversion of PRFAR and glutamine to IGP, AICAR and glutamate. The HisH subunit catalyzes the hydrolysis of glutamine to glutamate and ammonia as part of the synthesis of IGP and AICAR. The resulting ammonia molecule is channeled to the active site of HisF. The sequence is that of Imidazole glycerol phosphate synthase subunit HisH from Cupriavidus pinatubonensis (strain JMP 134 / LMG 1197) (Cupriavidus necator (strain JMP 134)).